The chain runs to 298 residues: GTP cyclohydrolase FolE2 (298 aa).

Belongs to the GTP cyclohydrolase IV family.

It catalyses the reaction GTP + H2O = 7,8-dihydroneopterin 3'-triphosphate + formate + H(+). The protein operates within cofactor biosynthesis; 7,8-dihydroneopterin triphosphate biosynthesis; 7,8-dihydroneopterin triphosphate from GTP: step 1/1. In terms of biological role, converts GTP to 7,8-dihydroneopterin triphosphate. The chain is GTP cyclohydrolase FolE2 from Xylella fastidiosa (strain M12).